The primary structure comprises 252 residues: Neurexophilin-3 (252 aa).

The first 22 residues, 1 to 22 (MQLTRCCFVFLVQGSLYLVICG), serve as a signal peptide directing secretion. Positions 23-75 (QDDGPPGSEDPERDDHEGQPRPRVPRKRGHISPKSRPMANSTLLGLLAPPGEA) are II. The segment at 27-58 (PPGSEDPERDDHEGQPRPRVPRKRGHISPKSR) is disordered. Residues 45–55 (RVPRKRGHISP) show a composition bias toward basic residues. 4 N-linked (GlcNAc...) asparagine glycosylation sites follow: Asn-62, Asn-127, Asn-137, and Asn-143. Residues 76-157 (WGILGQPPNR…LVPPSKAVEF (82 aa)) form an III region. An IV (linker domain) region spans residues 158 to 166 (HQEQQIFIE). Residues 167-252 (AKASKIFNCR…HSDTPYYPSG (86 aa)) form a v (Cys-rich) region.

Belongs to the neurexophilin family. Post-translationally, may be proteolytically processed at the boundary between the N-terminal non-conserved and the central conserved domain in neuron-like cells. As to expression, highest level in brain.

The protein localises to the secreted. Functionally, may be signaling molecules that resemble neuropeptides. Ligand for alpha-neurexins. The polypeptide is Neurexophilin-3 (NXPH3) (Homo sapiens (Human)).